The primary structure comprises 240 residues: MLVIPAIDILDGKCVRLTKGNFDSKEVYYDNPADMAKMWQECGAKRIHVVDLDGARQGHLVNRKVIEKIVNSCSVDIEVGGGIRNKEALDYLFSIGVSYIILGSAAIYDKDLLLYSVSHYGEKTIVGIDSKKREVAVSGWLERTKIKDTELAEKIKEIGIKTIIFTDISKDGTLHGPNFEALKDMLKVGVEIIASGGISSIEDLKRLKDMGVTGAIIGKALYTGMIDLKAALLELEREGI.

Residue aspartate 8 is the Proton acceptor of the active site. The active-site Proton donor is the aspartate 129.

It belongs to the HisA/HisF family.

It is found in the cytoplasm. The catalysed reaction is 1-(5-phospho-beta-D-ribosyl)-5-[(5-phospho-beta-D-ribosylamino)methylideneamino]imidazole-4-carboxamide = 5-[(5-phospho-1-deoxy-D-ribulos-1-ylimino)methylamino]-1-(5-phospho-beta-D-ribosyl)imidazole-4-carboxamide. The protein operates within amino-acid biosynthesis; L-histidine biosynthesis; L-histidine from 5-phospho-alpha-D-ribose 1-diphosphate: step 4/9. The sequence is that of 1-(5-phosphoribosyl)-5-[(5-phosphoribosylamino)methylideneamino] imidazole-4-carboxamide isomerase from Caldanaerobacter subterraneus subsp. tengcongensis (strain DSM 15242 / JCM 11007 / NBRC 100824 / MB4) (Thermoanaerobacter tengcongensis).